Reading from the N-terminus, the 466-residue chain is Exodeoxyribonuclease 7 large subunit (466 aa).

Belongs to the XseA family. In terms of assembly, heterooligomer composed of large and small subunits.

The protein localises to the cytoplasm. It catalyses the reaction Exonucleolytic cleavage in either 5'- to 3'- or 3'- to 5'-direction to yield nucleoside 5'-phosphates.. Bidirectionally degrades single-stranded DNA into large acid-insoluble oligonucleotides, which are then degraded further into small acid-soluble oligonucleotides. This Vesicomyosocius okutanii subsp. Calyptogena okutanii (strain HA) protein is Exodeoxyribonuclease 7 large subunit.